The chain runs to 132 residues: UPF0357 protein YCL012C (132 aa).

Positions 1–25 (MWDLFYFKVFFWVVLISLCIFMVHR) are cleaved as a signal peptide.

It belongs to the UPF0357 family.

The protein is UPF0357 protein YCL012C (YCL012C) of Saccharomyces bayanus (Yeast).